Consider the following 122-residue polypeptide: UPF0102 protein Krad_1407 (122 aa).

The protein belongs to the UPF0102 family.

This is UPF0102 protein Krad_1407 from Kineococcus radiotolerans (strain ATCC BAA-149 / DSM 14245 / SRS30216).